A 317-amino-acid chain; its full sequence is Serpentine receptor class delta-44 (317 aa).

6 consecutive transmembrane segments (helical) span residues 5 to 25 (ILSV…IILI), 90 to 110 (MFHI…LTTF), 130 to 150 (ILFI…LVII), 185 to 205 (RVNG…CLLL), 235 to 255 (IFGH…SLIT), and 264 to 284 (FFIF…TMYF).

It belongs to the nematode receptor-like protein srd family.

The protein localises to the membrane. In Caenorhabditis elegans, this protein is Serpentine receptor class delta-44 (srd-44).